The sequence spans 590 residues: Ras-specific guanine nucleotide-releasing factor RalGPS2 (590 aa).

Positions 49–287 (TPEEYAGQIT…YKLSLKIEPG (239 aa)) constitute a Ras-GEF domain. The disordered stretch occupies residues 288 to 319 (ASTPRSAASREDLAGPDIGASPQGGRKSSAAA). Phosphoserine is present on residues serine 293, serine 296, and serine 308. The PXXP signature appears at 331 to 334 (PQTP). Residue threonine 333 is modified to Phosphothreonine. A phosphoserine mark is found at serine 336 and serine 350. Threonine 368 bears the Phosphothreonine mark. Residues 380–413 (DSVMEPHAPSRGQAESSTLSSGISIGSSDGSELS) are disordered. Phosphoserine is present on serine 381. Residues 394 to 410 (ESSTLSSGISIGSSDGS) show a composition bias toward low complexity. At serine 429 the chain carries Phosphoserine. Positions 464-576 (AVTIQGVLRR…WFKHLSAACQ (113 aa)) constitute a PH domain. The tract at residues 466-590 (TIQGVLRRKT…QVPTNLMTFE (125 aa)) is required for stimulation of nucleotide exchange by RALA.

As to quaternary structure, interacts with RALA. Interacts with the SH3 domains of GRB2 and PLCG1. Abundant in brain and testis.

The protein localises to the cytoplasm. The protein resides in the cell membrane. In terms of biological role, guanine nucleotide exchange factor for the small GTPase RALA. May be involved in cytoskeletal organization. May also be involved in the stimulation of transcription in a Ras-independent fashion. The polypeptide is Ras-specific guanine nucleotide-releasing factor RalGPS2 (Ralgps2) (Mus musculus (Mouse)).